The chain runs to 620 residues: MYND-type zinc finger protein MUB1 (620 aa).

The MYND-type; degenerate zinc-finger motif lies at 514-555 (NFSCGKWEDFPRQFAKCRRCKRTKYCSRKCQLKAWGYHRYWC). Zn(2+) is bound by residues C530, C533, H551, and C555. The segment covering 563-606 (MRSTNTTTGVNTPNEPSSLNATATTAADVSNSTSTFTPNISTTV) has biased composition (polar residues). The interval 563–620 (MRSTNTTTGVNTPNEPSSLNATATTAADVSNSTSTFTPNISTTVPDEISNRDENSIPE) is disordered. Residues 610-620 (ISNRDENSIPE) are compositionally biased toward basic and acidic residues.

This sequence belongs to the MUB1/samB family. In terms of assembly, interacts with UBR2 and RPN4.

Its subcellular location is the cytoplasm. In terms of biological role, involved in the determination of the onset of polarized growth. Required for the ubiquitin-dependent degradation of RPN4. Cooperates with UBR2 to transfer ubiquitin from RAD6 to RPN4. The chain is MYND-type zinc finger protein MUB1 (MUB1) from Saccharomyces cerevisiae (strain ATCC 204508 / S288c) (Baker's yeast).